Consider the following 87-residue polypeptide: Large ribosomal subunit protein bL31B (87 aa).

Belongs to the bacterial ribosomal protein bL31 family. Type B subfamily. As to quaternary structure, part of the 50S ribosomal subunit.

The protein is Large ribosomal subunit protein bL31B of Klebsiella pneumoniae (strain 342).